The following is a 289-amino-acid chain: Phospholipase C (289 aa).

Residues 1 to 25 (MKFKKVVLGMCLIASVLVFPVTIKA) form the signal peptide. The propeptide occupies 26-51 (NACCDEYLQTPAAPHDIDSKLPHKLS). The Zn(2+) site is built by Trp52, His65, Asp106, His120, His169, Asp173, His179, His193, and Glu197. In terms of domain architecture, Zn-dependent PLC spans 52-289 (WSADNPTNTD…LEFWSKKTNE (238 aa)).

Belongs to the bacterial zinc-metallophospholipase C family. In terms of assembly, forms monomers, dimers and higher order oligomers, but only the monomer is enzymatically active. Zn(2+) serves as cofactor.

It localises to the secreted. It carries out the reaction a 1,2-diacyl-sn-glycero-3-phosphocholine + H2O = phosphocholine + a 1,2-diacyl-sn-glycerol + H(+). The enzyme catalyses 1,2-dihexadecanoyl-sn-glycero-3-phosphocholine + H2O = 1,2-dihexadecanoyl-sn-glycerol + phosphocholine + H(+). It catalyses the reaction 1-hexadecanoyl-2-(9Z-octadecenoyl)-sn-glycero-3-phosphocholine + H2O = 1-hexadecanoyl-2-(9Z-octadecenoyl)-sn-glycerol + phosphocholine + H(+). The catalysed reaction is 1,2-di-(9Z-octadecenoyl)-sn-glycero-3-phosphocholine + H2O = 1,2-di-(9Z-octadecenoyl)-sn-glycerol + phosphocholine + H(+). It carries out the reaction a 1,2-diacyl-sn-glycero-3-phosphoethanolamine + H2O = phosphoethanolamine + a 1,2-diacyl-sn-glycerol + H(+). The enzyme catalyses 1,2-di-(9Z-octadecenoyl)-sn-glycero-3-phosphoethanolamine + H2O = phosphoethanolamine + 1,2-di-(9Z-octadecenoyl)-sn-glycerol + H(+). It catalyses the reaction 1,2-dihexadecanoyl-sn-glycero-3-phosphoethanolamine + H2O = 1,2-dihexadecanoyl-sn-glycerol + phosphoethanolamine + H(+). The catalysed reaction is a 1,2-diacyl-sn-glycero-3-phospho-L-serine + H2O = O-phospho-L-serine + a 1,2-diacyl-sn-glycerol + H(+). It carries out the reaction a 1,2-diacyl-sn-glycero-3-phosphoglycerol + H2O = glycerol 1-phosphate + a 1,2-diacyl-sn-glycerol + H(+). The enzyme catalyses a 1,2-diacyl-sn-glycero-3-phospho-(1D-myo-inositol) + H2O = 1D-myo-inositol 1-phosphate + a 1,2-diacyl-sn-glycerol + H(+). It catalyses the reaction a sphingomyelin + H2O = phosphocholine + an N-acylsphing-4-enine + H(+). The catalysed reaction is a 1-O-(1Z-alkenyl)-2-acyl-sn-glycero-3-phosphoethanolamine + H2O = a 1-O-(1Z-alkenyl)-2-acyl-sn-glycerol + phosphoethanolamine + H(+). With respect to regulation, enzymatic activity of LmPC-PLC can be specifically inhibited by its propeptide added in trans. The tendency of the enzyme to oligomerize, which appears to largely attenuate the enzymatic activity, may be one of the mechanisms regulating phospholipase activity in the host cell during the different steps of the infection cycle of L.monocytogenes. Enzyme activity is inhibited by EDTA and o-phenanthroline in vitro. Functionally, major virulence factor whose phospholipase activity facilitates pore formation by the pore-forming toxin listeriolysin O (LLO), leading to vacuolar membrane disruption and vacuolar escape of L.monocytogenes, which enables the bacterium to spread in the host. Acts as a phospholipase C exhibiting broad substrate specificity, with the highest activities towards diacylglycerophospholipids with phosphocholine, phosphoserine, and phosphoethanolamine head groups, but less towards phosphoglycerol or phosphoinositol head groups. Is also able to hydrolyze sphingomyelin and plasmenylethanolamine. The chain is Phospholipase C from Listeria monocytogenes serovar 1/2a (strain ATCC BAA-679 / EGD-e).